Reading from the N-terminus, the 807-residue chain is Potassium transporter 9 (807 aa).

The Cytoplasmic portion of the chain corresponds to 1–59; it reads MAERVEASSVPEGENTIEEREVGAMWELEQKLDQPMDEEANKLNNMYREKGLSMLMLLR. The chain crosses the membrane as a helical span at residues 60-80; that stretch reads LSFQSLGIVYGDLGTSPLYVF. Residues 81–96 lie on the Extracellular side of the membrane; it reads YNTFPDGIDDSEDVIG. A helical transmembrane segment spans residues 97–117; the sequence is ALSLIIYSLLLIPLIKYVFIV. Residues 118-185 lie on the Cytoplasmic side of the membrane; that stretch reads CKANDNGQGG…EGKEWRKRAL (68 aa). A helical membrane pass occupies residues 186–206; that stretch reads LVVVLLGTCMMIGDGILTPAI. The Extracellular portion of the chain corresponds to 207–225; the sequence is SVLSATGGIKVNNPKMSGD. The helical transmembrane segment at 226-246 threads the bilayer; the sequence is IVVLVAIVILIGLFSMQHYGT. Over 247-248 the chain is Cytoplasmic; sequence DK. The helical transmembrane segment at 249 to 269 threads the bilayer; it reads VGWLFAPIVLIWFLFIGATGM. The Extracellular segment spans residues 270 to 299; the sequence is YNICKYDTSVLKAFSPTYIYLYFKRRGRDG. A helical membrane pass occupies residues 300 to 320; that stretch reads WISLGGILLSITGTEALYADI. Residues 321–322 are Cytoplasmic-facing; it reads AY. A helical membrane pass occupies residues 323-343; it reads FPLLAIQLAFTFFVFPCLLLA. Topologically, residues 344 to 369 are extracellular; it reads YCGQAAYLVIHKEHYQDAFYASIPDS. A helical transmembrane segment spans residues 370–390; the sequence is VYWPMFIVATGAAIVGSQATI. The Cytoplasmic portion of the chain corresponds to 391 to 417; it reads SGTYSIVKQAVAHGCFPRVKIVHTSKK. The chain crosses the membrane as a helical span at residues 418–438; it reads FLGQIYCPDINWILMLGCIAV. At 439 to 454 the chain is on the extracellular side; it reads TASFKKQSQIGNAYGT. Residues 455-475 form a helical membrane-spanning segment; the sequence is AVVLVMLVTTLLMVLIMLLVW. Topologically, residues 476–481 are cytoplasmic; that stretch reads HCHWIL. The chain crosses the membrane as a helical span at residues 482 to 502; the sequence is VLIFTFLSFFVELSYFSAVIF. The Extracellular portion of the chain corresponds to 503-507; it reads KIDEG. Residues 508 to 528 form a helical membrane-spanning segment; that stretch reads GWVPLIIAAISLLVMSVWHYA. The Cytoplasmic segment spans residues 529–807; it reads TVKKYEFEMH…LLNVGQVFYV (279 aa).

This sequence belongs to the HAK/KUP transporter (TC 2.A.72.3) family.

The protein localises to the cell membrane. Putative potassium transporter. The polypeptide is Potassium transporter 9 (POT9) (Arabidopsis thaliana (Mouse-ear cress)).